Consider the following 115-residue polypeptide: Pro-neuregulin-4, membrane-bound isoform (115 aa).

The Extracellular segment spans residues 1–62 (MPTDHEEPCG…SSIQTKSNLF (62 aa)). The 42-residue stretch at 5 to 46 (HEEPCGPSHKSFCLNGGLCYVIPTIPSPFCRCVENYTGARCE) folds into the EGF-like domain. 3 cysteine pairs are disulfide-bonded: C9/C23, C17/C34, and C36/C45. The N-linked (GlcNAc...) asparagine glycan is linked to N39. Residues 63 to 83 (EAFVALAVLVTLIIGAFYFLC) traverse the membrane as a helical segment. Over 84-115 (RKGHFQRASSVQYDINLVETSSTSAHHSHEQH) the chain is Cytoplasmic.

The protein belongs to the neuregulin family. Interacts with ERBB4. Proteolytic cleavage close to the plasma membrane on the external face leads to the release of the soluble growth factor form. Post-translationally, extensive glycosylation precedes the proteolytic cleavage.

The protein resides in the cell membrane. It localises to the secreted. In terms of biological role, low affinity ligand for the ERBB4 tyrosine kinase receptor. Concomitantly recruits ERBB1 and ERBB2 coreceptors, resulting in ligand-stimulated tyrosine phosphorylation and activation of the ERBB receptors. Does not bind to the ERBB1, ERBB2 and ERBB3 receptors. The protein is Pro-neuregulin-4, membrane-bound isoform (NRG4) of Homo sapiens (Human).